The primary structure comprises 281 residues: DegV domain-containing protein CA_C0948 (281 aa).

The DegV domain occupies 4 to 280; the sequence is IAIITDTTAD…PGLVGLVLLE (277 aa). Residues Ser60 and Ser93 each contribute to the hexadecanoate site.

May bind long-chain fatty acids, such as palmitate, and may play a role in lipid transport or fatty acid metabolism. In Clostridium acetobutylicum (strain ATCC 824 / DSM 792 / JCM 1419 / IAM 19013 / LMG 5710 / NBRC 13948 / NRRL B-527 / VKM B-1787 / 2291 / W), this protein is DegV domain-containing protein CA_C0948.